The chain runs to 326 residues: Metallophosphoesterase domain-containing protein 1 (326 aa).

It belongs to the UPF0046 family.

May have metallophosphoesterase activity (in vitro). The chain is Metallophosphoesterase domain-containing protein 1 (Mpped1) from Mus musculus (Mouse).